An 898-amino-acid polypeptide reads, in one-letter code: DNA gyrase subunit A (898 aa).

2 disordered regions span residues 1–22 (MSDD…DDDS) and 36–56 (EEEK…EKEG). The Topo IIA-type catalytic domain occupies 97–562 (LPDARDGLKP…VMSSINNEDL (466 aa)). Y185 (O-(5'-phospho-DNA)-tyrosine intermediate) is an active-site residue. The GyrA-box motif lies at 589–595 (QRRGGVG).

It belongs to the type II topoisomerase GyrA/ParC subunit family. Heterotetramer, composed of two GyrA and two GyrB chains. In the heterotetramer, GyrA contains the active site tyrosine that forms a transient covalent intermediate with DNA, while GyrB binds cofactors and catalyzes ATP hydrolysis.

It is found in the cytoplasm. The enzyme catalyses ATP-dependent breakage, passage and rejoining of double-stranded DNA.. A type II topoisomerase that negatively supercoils closed circular double-stranded (ds) DNA in an ATP-dependent manner to modulate DNA topology and maintain chromosomes in an underwound state. Negative supercoiling favors strand separation, and DNA replication, transcription, recombination and repair, all of which involve strand separation. Also able to catalyze the interconversion of other topological isomers of dsDNA rings, including catenanes and knotted rings. Type II topoisomerases break and join 2 DNA strands simultaneously in an ATP-dependent manner. In Metamycoplasma arthritidis (strain 158L3-1) (Mycoplasma arthritidis), this protein is DNA gyrase subunit A.